The primary structure comprises 444 residues: Exodeoxyribonuclease 7 large subunit (444 aa).

The protein belongs to the XseA family. As to quaternary structure, heterooligomer composed of large and small subunits.

It localises to the cytoplasm. The catalysed reaction is Exonucleolytic cleavage in either 5'- to 3'- or 3'- to 5'-direction to yield nucleoside 5'-phosphates.. Its function is as follows. Bidirectionally degrades single-stranded DNA into large acid-insoluble oligonucleotides, which are then degraded further into small acid-soluble oligonucleotides. This Xylella fastidiosa (strain 9a5c) protein is Exodeoxyribonuclease 7 large subunit.